Reading from the N-terminus, the 432-residue chain is Transcription factor E2F1 (432 aa).

Disordered regions lie at residues 39-85 (DVGA…GRPP) and 98-126 (YLAGSSGPFRGRGRHPGKGVKSPGEKSRY). A cyclin A:CDK2 binding region spans residues 65–106 (ATPQAPRPAPSAPRPALGRPPVKRRLDLETDHQYLAGSSGPF). The segment at 87–189 (KRRLDLETDH…KKSKNHIQWL (103 aa)) is interaction with BIRC2/c-IAP1. The DNA-binding element occupies 108 to 192 (GRGRHPGKGV…KNHIQWLGSR (85 aa)). Residues Lys115, Lys118, and Lys123 each carry the N6-acetyllysine modification. Residues 151 to 172 (LNWAAEVLKVQKRRIYDITNVL) form a leucine-zipper region. Residues 156-192 (EVLKVQKRRIYDITNVLEGIQLIAKKSKNHIQWLGSR) carry the DEF box motif. Lys183 is modified (N6-methyllysine; by SETD7). The interval 190–377 (GSRTMVGIGQ…RLSPLVAADS (188 aa)) is required for interaction with TRIM28. A dimerization region spans residues 193–282 (TMVGIGQRLE…AVDSAETFQI (90 aa)). A disordered region spans residues 297 to 342 (PEESAEGISPGRTSYQETSGEDRNADSGTAGPPPSPPSTSPTLDPS). A transactivation region spans residues 363–432 (PMEEDRLSPL…DFGDLTPLDF (70 aa)). A phosphoserine mark is found at Ser370 and Ser398. An RB1 binding region spans residues 404–421 (VDYHFGLEEGEGIRDLFD). Thr428 is modified (phosphothreonine).

Belongs to the E2F/DP family. As to quaternary structure, component of the DRTF1/E2F transcription factor complex. Forms heterodimers with DP family members. The E2F1 complex binds specifically hypophosphorylated RB1, the interaction represses E2F1-driven transcription. During the cell cycle, RB1 becomes phosphorylated in mid-to-late G1 phase, detaches from the DRTF1/E2F complex, rendering E2F transcriptionally active. Interacts with TRRAP, which probably mediates its interaction with histone acetyltransferase complexes, leading to transcription activation. Binds TOPBP1 and EAPP. Interacts with ARID3A. Interacts with TRIM28; the interaction inhibits E2F1 acetylation through recruiting HDAC1 and represses its transcriptional activity. Interaction with KAT2B; the interaction acetylates E2F1 enhancing its DNA-binding and transcriptional activity. Interacts with BIRC2/c-IAP1 (via BIR domains). The complex TFDP1:E2F1 interacts with CEBPA; the interaction prevents CEBPA binding to target genes promoters and represses its transcriptional activity. Interacts with RRP1B. Interacts with HCFC1. Interacts with KMT2E; the interaction is probably indirect and is mediated via HCFC1. Interacts with DCAF5 and L3MBTL3; the interaction requires methylation at Lys-183 and is necessary to target E2F1 for ubiquitination by the CRL4-DCAF5 E3 ubiquitin ligase complex. In terms of processing, phosphorylated by CDK2 and cyclin A-CDK2 in the S-phase. Phosphorylation by CHEK2 stabilizes E2F1 upon DNA damage and regulates its effect on transcription and apoptosis. Phosphorylation at Ser-398 by GSK3B promotes interaction with USP11, leading to its deubiquitination and stabilization. Ubiquitinated via 'Lys-63'-linked ubiquitin, leading to its degradation. Deubiquitinated by USP11 following phosphorylation by GSK3B, promoting its stability. Post-translationally, acetylation stimulates DNA-binding. Enhanced under stress conditions such as DNA damage and inhibited by retinoblastoma protein RB1. Regulated by KAP1/TRIM28 which recruits HDAC1 to E2F1 resulting in deacetylation. In terms of processing, methylation at Lys-183 by SETD7 promotes E2F1 ubiquitin-dependent proteasomal degradation.

It localises to the nucleus. BIRC2/c-IAP1 stimulates its transcriptional activity. Functionally, transcription activator that binds DNA cooperatively with DP proteins through the E2 recognition site, 5'-TTTC[CG]CGC-3' found in the promoter region of a number of genes whose products are involved in cell cycle regulation or in DNA replication. The DRTF1/E2F complex functions in the control of cell-cycle progression from G1 to S phase. E2F1 binds preferentially RB1 in a cell-cycle dependent manner. It can mediate both cell proliferation and TP53/p53-dependent apoptosis. Blocks adipocyte differentiation by binding to specific promoters repressing CEBPA binding to its target gene promoters. Directly activates transcription of PEG10. Positively regulates transcription of RRP1B. The chain is Transcription factor E2F1 from Rattus norvegicus (Rat).